The following is a 335-amino-acid chain: Legumin type B (335 aa).

Disordered stretches follow at residues 47–87 (PETQ…GNSV) and 102–155 (TEED…GRNG). A compositionally biased stretch (basic and acidic residues) spans 105–118 (DTAKRLRSPRDKRN). The segment covering 135 to 144 (QQEEEEEEEE) has biased composition (acidic residues). Positions 167–314 (ENIAQPARAD…AFGLRQRQVT (148 aa)) constitute a Cupin type-1 domain.

It belongs to the 11S seed storage protein (globulins) family. As to quaternary structure, hexamer; each subunit is composed of an acidic and a basic chain derived from a single precursor and linked by a disulfide bond.

Its function is as follows. This protein found in the seeds of many leguminous and non-leguminous plants is the source of sulfur-containing amino acids in seed meals. The protein is Legumin type B (LEB2) of Vicia faba (Broad bean).